The primary structure comprises 429 residues: Adenylosuccinate synthetase (429 aa).

GTP is bound by residues 12–18 and 40–42; these read GDEGKGK and GHT. Residue aspartate 13 is the Proton acceptor of the active site. Residues aspartate 13 and glycine 40 each contribute to the Mg(2+) site. IMP contacts are provided by residues 13–16, 38–41, threonine 129, arginine 143, glutamine 223, threonine 238, and arginine 302; these read DEGK and NAGH. Residue histidine 41 is the Proton donor of the active site. Residue 298 to 304 coordinates substrate; it reads TVTGRPR. GTP is bound by residues arginine 304, 330–332, and 412–414; these read KLD and STS.

Belongs to the adenylosuccinate synthetase family. Homodimer. It depends on Mg(2+) as a cofactor.

The protein localises to the cytoplasm. The enzyme catalyses IMP + L-aspartate + GTP = N(6)-(1,2-dicarboxyethyl)-AMP + GDP + phosphate + 2 H(+). It functions in the pathway purine metabolism; AMP biosynthesis via de novo pathway; AMP from IMP: step 1/2. Its function is as follows. Plays an important role in the de novo pathway of purine nucleotide biosynthesis. Catalyzes the first committed step in the biosynthesis of AMP from IMP. The polypeptide is Adenylosuccinate synthetase (Rhodospirillum rubrum (strain ATCC 11170 / ATH 1.1.1 / DSM 467 / LMG 4362 / NCIMB 8255 / S1)).